We begin with the raw amino-acid sequence, 910 residues long: Protein translocase subunit SecA (910 aa).

Residues glutamine 89, 107–111 (GEGKT), and aspartate 502 contribute to the ATP site. Residues cysteine 894, cysteine 896, cysteine 905, and histidine 906 each contribute to the Zn(2+) site.

Belongs to the SecA family. As to quaternary structure, monomer and homodimer. Part of the essential Sec protein translocation apparatus which comprises SecA, SecYEG and auxiliary proteins SecDF-YajC and YidC. Requires Zn(2+) as cofactor.

It localises to the cell inner membrane. It is found in the cytoplasm. It catalyses the reaction ATP + H2O + cellular proteinSide 1 = ADP + phosphate + cellular proteinSide 2.. Part of the Sec protein translocase complex. Interacts with the SecYEG preprotein conducting channel. Has a central role in coupling the hydrolysis of ATP to the transfer of proteins into and across the cell membrane, serving both as a receptor for the preprotein-SecB complex and as an ATP-driven molecular motor driving the stepwise translocation of polypeptide chains across the membrane. The polypeptide is Protein translocase subunit SecA (Chelativorans sp. (strain BNC1)).